The following is a 446-amino-acid chain: Sensor protein PfeS (446 aa).

At 1–9 the chain is on the cytoplasmic side; the sequence is MRRHPLLWK. The chain crosses the membrane as a helical span at residues 10 to 30; the sequence is LALLQVGFCLLLTWLIYTWGL. Topologically, residues 31–155 are periplasmic; the sequence is SVERSTYFLA…LLPGGLTPWT (125 aa). The chain crosses the membrane as a helical span at residues 156–176; that stretch reads HLVTHGIVPTLLAALLGLLLY. Positions 177 to 233 constitute an HAMP domain; the sequence is RHLVVPLNRLRDRADALRADELESTPLAAPLAARRDELGELAQALEHMAERLRLSLA. Over 177–446 the chain is Cytoplasmic; that stretch reads RHLVVPLNRL…CLHLWLPAAA (270 aa). The Histidine kinase domain occupies 241-446; the sequence is TLSHELRTPL…CLHLWLPAAA (206 aa). His244 carries the post-translational modification Phosphohistidine; by autocatalysis.

It is found in the cell inner membrane. The catalysed reaction is ATP + protein L-histidine = ADP + protein N-phospho-L-histidine.. Its function is as follows. Member of the two-component regulatory system PfeR/PfeS. May activate PfeR by phosphorylation. This is Sensor protein PfeS (pfeS) from Pseudomonas aeruginosa (strain ATCC 15692 / DSM 22644 / CIP 104116 / JCM 14847 / LMG 12228 / 1C / PRS 101 / PAO1).